Consider the following 737-residue polypeptide: Protein OPG064 (737 aa).

An N-acetylmethionine; by host modification is found at Met-1. The cysteines at positions 496 and 535 are disulfide-linked.

The protein belongs to the orthopoxvirus OPG064 family. Interacts with host KLC2; this interaction promotes IEV trafficking by engaging the host kinesin-1 complex. Interacts with protein OPG056. N-acetylated on initiator methionine by host.

Functionally, plays a role in intracellular enveloped virus (IEV) transport to the cell surface on microtubules. Together with protein OPG056, forms a complex that interacts with host KLC2 (kinesin light chain isoform 2) to engage the kinesin-1 complex and thereby promote IEV trafficking. In Monkeypox virus, this protein is Protein OPG064 (OPG064).